A 1483-amino-acid chain; its full sequence is Heme-responsive zinc finger transcription factor HAP1 (1483 aa).

The segment covering 1 to 50 (MSNTPYNSSVPSIASMTQSSVSRSPNMHTATTPGANTSSNSPPLHMSSDS) has biased composition (polar residues). Residues 1 to 56 (MSNTPYNSSVPSIASMTQSSVSRSPNMHTATTPGANTSSNSPPLHMSSDSSKIKRK) form a disordered region. Positions 64, 67, 74, 81, 84, and 93 each coordinate Zn(2+). The segment at residues 64–93 (CTICRKRKVKCDKLRPHCQQCTKTGVAHLC) is a DNA-binding region (zn(2)-C6 fungal-type). Positions 105 to 134 (EKELLKDNELKKLRERVKSLEKTLSKVHSS) form a coiled coil. Polar residues predominate over residues 162 to 176 (VNANTGSASSASHMH). Residues 162-208 (VNANTGSASSASHMHQQQQQQQQQEQQQDFSRSANANANSSSLSISN) form a disordered region. Low complexity predominate over residues 177 to 208 (QQQQQQQQQEQQQDFSRSANANANSSSLSISN). A heme-responsive; required for HMC formation region spans residues 244 to 444 (KGDPYLKLLW…NTIPHHQPQS (201 aa)). 6 HRM repeats span residues 280 to 285 (KCPINH), 299 to 304 (KCPVDH), 323 to 328 (KCPVDH), 347 to 352 (RCPVDH), 389 to 394 (KCPVDH), and 415 to 420 (RCPIDH). Polar residues-rich tracts occupy residues 432-447 (STHN…SGSH) and 706-734 (QLNA…NPTL). Disordered regions lie at residues 432-458 (STHN…NRKH) and 706-767 (QLNA…KENQ). Low complexity predominate over residues 735–759 (NNNMSAATTNSSSRSGSADSRSGSN). The stretch at 1192–1197 (KCPVYQ) is one HRM 7 repeat. 2 disordered regions span residues 1266–1289 (DGYI…SNGL) and 1386–1411 (NTDT…ASNS). Over residues 1388–1411 (DTSANGSALSTLTSPQGSDLASNS) the composition is skewed to polar residues.

In terms of assembly, binds DNA as a homodimer. Interacts with SRO9 and YDJ1. In the absence of heme, binds to at least four cellular proteins, including YDJ1 and SRO9, forming a high-molecular-weight complex (HMC) which results in repression of its activity and dictates its DNA-binding specificity.

The protein resides in the nucleus. In terms of biological role, regulation of oxygen dependent gene expression. It modulates the expression of Iso-1 (CYP1) and Iso-2 (CYP3) cytochrome c. In response to heme, promotes transcription of genes encoding functions required for respiration, controlling oxidative damage and repression of anaerobic genes. Binds to the sequence 5'-CGGNNNTNNCGG-3'. This chain is Heme-responsive zinc finger transcription factor HAP1 (HAP1), found in Saccharomyces cerevisiae (strain JAY291) (Baker's yeast).